A 299-amino-acid chain; its full sequence is Protease HtpX homolog (299 aa).

2 helical membrane-spanning segments follow: residues Trp14–Leu34 and Gly39–Phe59. Residue His143 coordinates Zn(2+). Glu144 is a catalytic residue. Residue His147 coordinates Zn(2+). 2 consecutive transmembrane segments (helical) span residues Ile153 to Ala173 and Ile198 to Val218. Glu227 serves as a coordination point for Zn(2+).

It belongs to the peptidase M48B family. The cofactor is Zn(2+).

It localises to the cell membrane. The protein is Protease HtpX homolog of Streptococcus thermophilus (strain ATCC BAA-491 / LMD-9).